We begin with the raw amino-acid sequence, 264 residues long: Phosphatidylserine decarboxylase proenzyme (264 aa).

Active-site charge relay system; for autoendoproteolytic cleavage activity residues include D86, H142, and S226. S226 acts as the Schiff-base intermediate with substrate; via pyruvic acid; for decarboxylase activity in catalysis. Position 226 is a pyruvic acid (Ser); by autocatalysis (S226).

Belongs to the phosphatidylserine decarboxylase family. PSD-B subfamily. Prokaryotic type I sub-subfamily. As to quaternary structure, heterodimer of a large membrane-associated beta subunit and a small pyruvoyl-containing alpha subunit. Pyruvate serves as cofactor. Post-translationally, is synthesized initially as an inactive proenzyme. Formation of the active enzyme involves a self-maturation process in which the active site pyruvoyl group is generated from an internal serine residue via an autocatalytic post-translational modification. Two non-identical subunits are generated from the proenzyme in this reaction, and the pyruvate is formed at the N-terminus of the alpha chain, which is derived from the carboxyl end of the proenzyme. The autoendoproteolytic cleavage occurs by a canonical serine protease mechanism, in which the side chain hydroxyl group of the serine supplies its oxygen atom to form the C-terminus of the beta chain, while the remainder of the serine residue undergoes an oxidative deamination to produce ammonia and the pyruvoyl prosthetic group on the alpha chain. During this reaction, the Ser that is part of the protease active site of the proenzyme becomes the pyruvoyl prosthetic group, which constitutes an essential element of the active site of the mature decarboxylase.

The protein resides in the cell membrane. It catalyses the reaction a 1,2-diacyl-sn-glycero-3-phospho-L-serine + H(+) = a 1,2-diacyl-sn-glycero-3-phosphoethanolamine + CO2. Its pathway is phospholipid metabolism; phosphatidylethanolamine biosynthesis; phosphatidylethanolamine from CDP-diacylglycerol: step 2/2. In terms of biological role, catalyzes the formation of phosphatidylethanolamine (PtdEtn) from phosphatidylserine (PtdSer). The polypeptide is Phosphatidylserine decarboxylase proenzyme (Geobacillus kaustophilus (strain HTA426)).